Reading from the N-terminus, the 201-residue chain is 3-isopropylmalate dehydratase small subunit (201 aa).

It belongs to the LeuD family. LeuD type 1 subfamily. Heterodimer of LeuC and LeuD.

It catalyses the reaction (2R,3S)-3-isopropylmalate = (2S)-2-isopropylmalate. It functions in the pathway amino-acid biosynthesis; L-leucine biosynthesis; L-leucine from 3-methyl-2-oxobutanoate: step 2/4. Functionally, catalyzes the isomerization between 2-isopropylmalate and 3-isopropylmalate, via the formation of 2-isopropylmaleate. In Escherichia fergusonii (strain ATCC 35469 / DSM 13698 / CCUG 18766 / IAM 14443 / JCM 21226 / LMG 7866 / NBRC 102419 / NCTC 12128 / CDC 0568-73), this protein is 3-isopropylmalate dehydratase small subunit.